Here is a 275-residue protein sequence, read N- to C-terminus: Large ribosomal subunit protein uL2 (275 aa).

The segment at 223 to 275 (VAMNPVDHPHGGGEGRTSGGRHPVTPWGVPTKGYKTRSNKRTDKYIVRRRNKK) is disordered.

It belongs to the universal ribosomal protein uL2 family. Part of the 50S ribosomal subunit. Forms a bridge to the 30S subunit in the 70S ribosome.

Its function is as follows. One of the primary rRNA binding proteins. Required for association of the 30S and 50S subunits to form the 70S ribosome, for tRNA binding and peptide bond formation. It has been suggested to have peptidyltransferase activity; this is somewhat controversial. Makes several contacts with the 16S rRNA in the 70S ribosome. The protein is Large ribosomal subunit protein uL2 of Shewanella loihica (strain ATCC BAA-1088 / PV-4).